Reading from the N-terminus, the 200-residue chain is Pyridoxamine 5'-phosphate oxidase homolog (200 aa).

FMN contacts are provided by phenylalanine 60, lysine 68, and asparagine 125.

Belongs to the pyridoxamine 5'-phosphate oxidase family. The cofactor is FMN.

The protein resides in the cytoplasm. It is found in the nucleus. The protein is Pyridoxamine 5'-phosphate oxidase homolog of Saccharomyces cerevisiae (strain ATCC 204508 / S288c) (Baker's yeast).